The primary structure comprises 297 residues: GTP cyclohydrolase FolE2 (297 aa).

Disordered stretches follow at residues 1 to 21 (MTHA…SERD) and 180 to 207 (IRAE…RERP).

The protein belongs to the GTP cyclohydrolase IV family.

The enzyme catalyses GTP + H2O = 7,8-dihydroneopterin 3'-triphosphate + formate + H(+). Its pathway is cofactor biosynthesis; 7,8-dihydroneopterin triphosphate biosynthesis; 7,8-dihydroneopterin triphosphate from GTP: step 1/1. In terms of biological role, converts GTP to 7,8-dihydroneopterin triphosphate. This Methylibium petroleiphilum (strain ATCC BAA-1232 / LMG 22953 / PM1) protein is GTP cyclohydrolase FolE2.